Reading from the N-terminus, the 157-residue chain is Protein UXT (157 aa).

The protein belongs to the UXT family. Homohexamer. Component of the PAQosome complex which is responsible for the biogenesis of several protein complexes and which consists of R2TP complex members RUVBL1, RUVBL2, RPAP3 and PIH1D1, URI complex members PFDN2, PFDN6, PDRG1, UXT and URI1 as well as ASDURF, POLR2E and DNAAF10/WDR92. Interacts with LRPPRC. Interacts with androgen receptor AR (via N-terminus). Interacts with estrogen receptor ESR1; the interaction relocalizes ESR1 from the nucleus to the cytoplasm. In the nucleus, interacts specifically with RELA (via RHD domain) and forms a dynamic complex with NF-kappa-B and is recruited to the NF-kappa-B enhanceosome upon stimulation. Interacts with MECOM. Interacts with URI1. As to quaternary structure, part of complex I composed of TNF-alpha receptor TNFRSF1A, TRADD, TRAF2 and RIPK1 formed in response to TNF-alpha stimulation. Within the complex, interacts (via TPQE motif) with TRAF2; the interaction prevents the recruitment of FADD and CASP8/caspase 8 to complex I. Post-translationally, ubiquitinated by E3 ubiquitin-protein ligase complex containing FBXO7; leading to proteasomal degradation. Ubiquitous. Expressed in prostate epithelial cells. Expressed in mammary epithelial cells. Highest levels in the heart, skeletal muscle, pancreas, kidney, liver, adrenal gland, peripheral blood leukocytes, lymph node, prostate, and thyroid and the lowest levels in bladder and uterus. Overexpressed in a number of tumor tissues.

It is found in the cytoplasm. It localises to the nucleus. Its subcellular location is the cytoskeleton. The protein localises to the microtubule organizing center. The protein resides in the centrosome. It is found in the spindle pole. Its function is as follows. Involved in gene transcription regulation. Acts in concert with the corepressor URI1 to regulate androgen receptor AR-mediated transcription. Together with URI1, associates with chromatin to the NKX3-1 promoter region. Negatively regulates the transcriptional activity of the estrogen receptor ESR1 by inducing its translocation into the cytoplasm. May act as nuclear chaperone that facilitates the formation of the NF-kappa-B enhanceosome and thus positively regulates NF-kappa-B transcription activity. Potential component of mitochondrial-associated LRPPRC, a multidomain organizer that potentially integrates mitochondria and the microtubular cytoskeleton with chromosome remodeling. Increasing concentrations of UXT contributes to progressive aggregation of mitochondria and cell death potentially through its association with LRPPRC. Suppresses cell transformation and it might mediate this function by interaction and inhibition of the biological activity of cell proliferation and survival stimulatory factors like MECOM. Plays a role in protecting cells against TNF-alpha-induced apoptosis by preventing the recruitment of FADD and caspase 8 to the apoptotic complex I, composed of TRADD, TRAF2 and RIPK1/RIP. This Homo sapiens (Human) protein is Protein UXT (UXT).